The chain runs to 307 residues: Cysteine synthase (307 aa).

An N6-(pyridoxal phosphate)lysine modification is found at Lys-42. Residues Asn-72, 176-180 (GTGGH), and Ser-263 each bind pyridoxal 5'-phosphate.

Belongs to the cysteine synthase/cystathionine beta-synthase family. It depends on pyridoxal 5'-phosphate as a cofactor.

It catalyses the reaction O-acetyl-L-serine + hydrogen sulfide = L-cysteine + acetate. The protein operates within amino-acid biosynthesis; L-cysteine biosynthesis; L-cysteine from L-serine: step 2/2. The polypeptide is Cysteine synthase (cysK) (Flavobacterium sp. (strain K3-15 / DSM ID92-509)).